The sequence spans 338 residues: 1-aminocyclopropane-1-carboxylate deaminase (338 aa).

Lys51 carries the post-translational modification N6-(pyridoxal phosphate)lysine. The active-site Nucleophile is the Ser78.

Belongs to the ACC deaminase/D-cysteine desulfhydrase family. Homotrimer. It depends on pyridoxal 5'-phosphate as a cofactor.

It carries out the reaction 1-aminocyclopropane-1-carboxylate + H2O = 2-oxobutanoate + NH4(+). Catalyzes a cyclopropane ring-opening reaction, the irreversible conversion of 1-aminocyclopropane-1-carboxylate (ACC) to ammonia and alpha-ketobutyrate. Allows growth on ACC as a nitrogen source. The chain is 1-aminocyclopropane-1-carboxylate deaminase from Ralstonia nicotianae (strain ATCC BAA-1114 / GMI1000) (Ralstonia solanacearum).